Reading from the N-terminus, the 693-residue chain is Tegument protein UL47 (693 aa).

2 disordered regions span residues 1 to 32 (MSAR…DGVG) and 48 to 126 (ELEA…GYLG). Positions 48-57 (ELEALEEMAG) are enriched in acidic residues. The tract at residues 50 to 75 (EALEEMAGDEPPVRRRREGPRARRRR) is RNA-binding. Positions 63–75 (RRRREGPRARRRR) match the Nuclear localization signal motif. A compositionally biased stretch (basic residues) spans 63-75 (RRRREGPRARRRR). Residues 647-670 (SVLGPGVRVVDIMSQFRKLLMGDE) carry the Nuclear export signal motif.

Belongs to the alphaherpesvirinae HHV-1 UL47 family. As to quaternary structure, interacts with US3 kinase. Interacts with UL31 and UL34; these interactions seem important for efficient virion nuclear egress. Interacts with UL41/VHS. Post-translationally, phosphorylated by US3. This phosphorylation is required for proper nuclear localization.

The protein resides in the virion tegument. Its subcellular location is the host nucleus. The protein localises to the host cytoplasm. Functionally, tegument protein that can bind to various RNA transcripts. Plays a role in the attenuation of selective viral and cellular mRNA degradation by modulating the activity of host shutoff RNase UL41/VHS. Also plays a role in the primary envelopment of virions in the perinuclear space, probably by interacting with two nuclear egress proteins UL31 and UL34. The chain is Tegument protein UL47 from Human herpesvirus 1 (strain F) (HHV-1).